Here is a 456-residue protein sequence, read N- to C-terminus: Choline kinase (456 aa).

Belongs to the choline/ethanolamine kinase family. In terms of assembly, monomer. Mg(2+) serves as cofactor.

The protein resides in the cytoplasm. It is found in the nucleus. The catalysed reaction is choline + ATP = phosphocholine + ADP + H(+). It participates in phospholipid metabolism; phosphatidylcholine biosynthesis; phosphocholine from choline: step 1/1. Its function is as follows. Catalyzes the committed step in the synthesis of phosphatidylcholine by the CDP-choline pathway. The protein is Choline kinase of Schizosaccharomyces pombe (strain 972 / ATCC 24843) (Fission yeast).